We begin with the raw amino-acid sequence, 1184 residues long: Protein stu1 (1184 aa).

2 HEAT repeats span residues 92–130 (FCPV…EHYV) and 162–194 (RSYV…FQGA). Composition is skewed to basic and acidic residues over residues 229–240 (SSTARPRSRVEP) and 308–317 (EAEKAPHMET). The segment at 229–336 (SSTARPRSRV…APQPLHAETS (108 aa)) is disordered. The HEAT 3 repeat unit spans residues 463-499 (VTYTPRLLQHVTSACQDKNAQLRLFAAGWLKTLLNKQ). 2 disordered regions span residues 564 to 584 (LEKD…SDTL) and 602 to 906 (ARLA…RVEE). Residues 572–584 (NRDQSSYLSSDTL) show a composition bias toward polar residues. Residues 640–649 (APLSSLSSAP) are compositionally biased toward low complexity. Residues 723–737 (SASNENETQVATQVA) show a composition bias toward polar residues. 2 stretches are compositionally biased toward basic and acidic residues: residues 787–811 (AGRH…ENKL) and 882–895 (EQDR…DSAE).

This sequence belongs to the CLASP family. As to quaternary structure, interacts with microtubules.

The protein resides in the cytoplasm. Its subcellular location is the cytoskeleton. It is found in the nucleus. The protein localises to the spindle. Functionally, microtubule binding protein that promotes the stabilization of dynamic microtubules. Required for mitotic spindle formation. The sequence is that of Protein stu1 (stu1) from Aspergillus oryzae (strain ATCC 42149 / RIB 40) (Yellow koji mold).